Here is a 481-residue protein sequence, read N- to C-terminus: GTPase Der (481 aa).

EngA-type G domains follow at residues 47–210 and 221–394; these read PVLA…PDVS and RRVA…ESWE. Residues 53 to 60, 100 to 104, 162 to 165, 227 to 234, 274 to 278, and 339 to 342 contribute to the GTP site; these read GRPNVGKS, DTGGW, NKVD, DTAGI, and NKWD. One can recognise a KH-like domain in the interval 395 to 477; it reads TRIPTGKFNA…PIVLNMRVRE (83 aa).

The protein belongs to the TRAFAC class TrmE-Era-EngA-EngB-Septin-like GTPase superfamily. EngA (Der) GTPase family. In terms of assembly, associates with the 50S ribosomal subunit.

In terms of biological role, GTPase that plays an essential role in the late steps of ribosome biogenesis. This is GTPase Der from Leifsonia xyli subsp. xyli (strain CTCB07).